Here is a 479-residue protein sequence, read N- to C-terminus: Ribosomal RNA small subunit methyltransferase F (479 aa).

Residues 125–131 (AAAPGSK), Glu-149, Asp-176, and Asp-194 contribute to the S-adenosyl-L-methionine site. Cys-247 functions as the Nucleophile in the catalytic mechanism.

This sequence belongs to the class I-like SAM-binding methyltransferase superfamily. RsmB/NOP family.

It is found in the cytoplasm. The enzyme catalyses cytidine(1407) in 16S rRNA + S-adenosyl-L-methionine = 5-methylcytidine(1407) in 16S rRNA + S-adenosyl-L-homocysteine + H(+). In terms of biological role, specifically methylates the cytosine at position 1407 (m5C1407) of 16S rRNA. The sequence is that of Ribosomal RNA small subunit methyltransferase F from Shigella sonnei (strain Ss046).